The sequence spans 218 residues: Kynurenine formamidase (218 aa).

Substrate is bound at residue W27. Zn(2+) contacts are provided by H57, H61, and D63. H67 functions as the Proton donor/acceptor in the catalytic mechanism. 2 residues coordinate Zn(2+): H169 and E181.

The protein belongs to the Cyclase 1 superfamily. KynB family. As to quaternary structure, homodimer. Requires Zn(2+) as cofactor.

It catalyses the reaction N-formyl-L-kynurenine + H2O = L-kynurenine + formate + H(+). It participates in amino-acid degradation; L-tryptophan degradation via kynurenine pathway; L-kynurenine from L-tryptophan: step 2/2. Inhibited by EDTA. Insensitive to phenylmethylsulfonyl fluoride (PMSF). In terms of biological role, catalyzes the hydrolysis of N-formyl-L-kynurenine to L-kynurenine, the second step in the kynurenine pathway of tryptophan degradation. This is Kynurenine formamidase from Cupriavidus metallidurans (strain ATCC 43123 / DSM 2839 / NBRC 102507 / CH34) (Ralstonia metallidurans).